Here is a 30-residue protein sequence, read N- to C-terminus: Kalata-B16 (30 aa).

Residues 1–30 constitute a cross-link (cyclopeptide (Gly-Asp)); it reads GIPCAESCVYIPCTITALLGCKCQDKVCYD. Intrachain disulfides connect C4-C21, C8-C23, and C13-C28.

Post-translationally, this is a cyclic peptide.

In terms of biological role, probably participates in a plant defense mechanism. The protein is Kalata-B16 of Oldenlandia affinis.